Consider the following 251-residue polypeptide: 1-(5-phosphoribosyl)-5-[(5-phosphoribosylamino)methylideneamino] imidazole-4-carboxamide isomerase (251 aa).

Aspartate 8 (proton acceptor) is an active-site residue. The active-site Proton donor is the aspartate 131.

This sequence belongs to the HisA/HisF family.

The protein localises to the cytoplasm. It catalyses the reaction 1-(5-phospho-beta-D-ribosyl)-5-[(5-phospho-beta-D-ribosylamino)methylideneamino]imidazole-4-carboxamide = 5-[(5-phospho-1-deoxy-D-ribulos-1-ylimino)methylamino]-1-(5-phospho-beta-D-ribosyl)imidazole-4-carboxamide. It functions in the pathway amino-acid biosynthesis; L-histidine biosynthesis; L-histidine from 5-phospho-alpha-D-ribose 1-diphosphate: step 4/9. This chain is 1-(5-phosphoribosyl)-5-[(5-phosphoribosylamino)methylideneamino] imidazole-4-carboxamide isomerase, found in Burkholderia pseudomallei (strain 1710b).